Here is a 203-residue protein sequence, read N- to C-terminus: Putative 3-methyladenine DNA glycosylase (203 aa).

This sequence belongs to the DNA glycosylase MPG family.

The polypeptide is Putative 3-methyladenine DNA glycosylase (Clostridium botulinum (strain Langeland / NCTC 10281 / Type F)).